The chain runs to 303 residues: Major fimbrium anchoring subunit FimB (303 aa).

Positions 1–22 (MNDAKKYIVSVLILLVAGMFGG) are cleaved as a signal peptide. Cys-23 is lipidated: N-palmitoyl cysteine. Cys-23 is lipidated: S-diacylglycerol cysteine.

The protein belongs to the bacteroidetes fimbrillin superfamily. FimB/Mfa2 family. In terms of assembly, fimB is not part of the fimbrium itself, but anchors the fimbrium in the outer membrane. Linear, head-to-tail oligomerization of fimbrial subunits mediates assembly of the fimbrium stalk, while the minor components FimC, FimD and FimE probably form the fimbrium tip. The anchoring subunit FimB limits fimbrium length and is important for solid fimbrium attachment to the outer membrane. In its absence, the major fimbriae become very long and are easily detached from the membrane.

It localises to the cell outer membrane. In terms of biological role, anchoring subunit of the major fimbriae. Regulates fimbrial length. These filamentous pili are attached to the cell surface; they mediate biofilm formation, adhesion onto host cells and onto other bacteria that are part of the oral microbiome. Fimbriae of P.gingivalis are major virulence factors. The polypeptide is Major fimbrium anchoring subunit FimB (Porphyromonas gingivalis (strain ATCC 33277 / DSM 20709 / CIP 103683 / JCM 12257 / NCTC 11834 / 2561)).